The primary structure comprises 376 residues: TelA-like protein SERP0976 (376 aa).

It belongs to the TelA family.

In Staphylococcus epidermidis (strain ATCC 35984 / DSM 28319 / BCRC 17069 / CCUG 31568 / BM 3577 / RP62A), this protein is TelA-like protein SERP0976.